We begin with the raw amino-acid sequence, 136 residues long: ATP synthase epsilon chain, plastid (136 aa).

Belongs to the ATPase epsilon chain family. In terms of assembly, F-type ATPases have 2 components, CF(1) - the catalytic core - and CF(0) - the membrane proton channel. CF(1) has five subunits: alpha(3), beta(3), gamma(1), delta(1), epsilon(1). CF(0) has three main subunits: a, b and c.

The protein resides in the plastid thylakoid membrane. In terms of biological role, produces ATP from ADP in the presence of a proton gradient across the membrane. The protein is ATP synthase epsilon chain, plastid of Cuscuta reflexa (Southern Asian dodder).